We begin with the raw amino-acid sequence, 865 residues long: Alanine--tRNA ligase (865 aa).

Zn(2+) contacts are provided by histidine 554, histidine 558, cysteine 656, and histidine 660.

Belongs to the class-II aminoacyl-tRNA synthetase family. The cofactor is Zn(2+).

It localises to the cytoplasm. The enzyme catalyses tRNA(Ala) + L-alanine + ATP = L-alanyl-tRNA(Ala) + AMP + diphosphate. In terms of biological role, catalyzes the attachment of alanine to tRNA(Ala) in a two-step reaction: alanine is first activated by ATP to form Ala-AMP and then transferred to the acceptor end of tRNA(Ala). Also edits incorrectly charged Ser-tRNA(Ala) and Gly-tRNA(Ala) via its editing domain. This chain is Alanine--tRNA ligase, found in Francisella tularensis subsp. holarctica (strain LVS).